The following is a 245-amino-acid chain: Carboxy-S-adenosyl-L-methionine synthase (245 aa).

S-adenosyl-L-methionine is bound by residues Y39, 64–66 (GSS), 117–118 (DI), and R199.

It belongs to the class I-like SAM-binding methyltransferase superfamily. Cx-SAM synthase family. Homodimer.

The catalysed reaction is prephenate + S-adenosyl-L-methionine = carboxy-S-adenosyl-L-methionine + 3-phenylpyruvate + H2O. Functionally, catalyzes the conversion of S-adenosyl-L-methionine (SAM) to carboxy-S-adenosyl-L-methionine (Cx-SAM). The sequence is that of Carboxy-S-adenosyl-L-methionine synthase from Desulfotalea psychrophila (strain LSv54 / DSM 12343).